The primary structure comprises 256 residues: 5-keto-4-deoxy-D-glucarate aldolase (256 aa).

H50 (proton acceptor) is an active-site residue. Q151 is a binding site for substrate. E153 contributes to the Mg(2+) binding site. Substrate contacts are provided by S178 and D179. D179 contributes to the Mg(2+) binding site.

The protein belongs to the HpcH/HpaI aldolase family. KDGluc aldolase subfamily. As to quaternary structure, homohexamer; trimer of dimers. Mg(2+) is required as a cofactor.

The catalysed reaction is 5-dehydro-4-deoxy-D-glucarate = 2-hydroxy-3-oxopropanoate + pyruvate. It catalyses the reaction 2-dehydro-3-deoxy-D-glucarate = 2-hydroxy-3-oxopropanoate + pyruvate. It participates in carbohydrate acid metabolism; galactarate degradation; D-glycerate from galactarate: step 2/3. Catalyzes the reversible retro-aldol cleavage of both 5-keto-4-deoxy-D-glucarate and 2-keto-3-deoxy-D-glucarate to pyruvate and tartronic semialdehyde. This chain is 5-keto-4-deoxy-D-glucarate aldolase, found in Escherichia fergusonii (strain ATCC 35469 / DSM 13698 / CCUG 18766 / IAM 14443 / JCM 21226 / LMG 7866 / NBRC 102419 / NCTC 12128 / CDC 0568-73).